The primary structure comprises 356 residues: Cysteine protease XCP2 (356 aa).

The signal sequence occupies residues 1–26 (MALSSPSRILCFALALSAASLSLSFA). Positions 27–137 (SSHDYSIVGY…AEFAYRDVEA (111 aa)) are cleaved as a propeptide — activation peptide. Intrachain disulfides connect Cys-159–Cys-201, Cys-193–Cys-234, and Cys-292–Cys-343. Cys-162 is an active-site residue. Asn-181 is a glycosylation site (N-linked (GlcNAc...) asparagine). Active-site residues include His-298 and Asn-318.

It belongs to the peptidase C1 family. In terms of assembly, interacts with PRN2. As to expression, mostly expressed in roots, stems and flowers. Confined to tracheary elements, and specifically to xylem.

Its subcellular location is the vacuole. The protein resides in the cell membrane. Cysteine protease involved in xylem tracheary element (TE) autolysis during xylogenesis in roots. Participates in micro autolysis within the intact central vacuole before mega autolysis is initiated by tonoplast implosion. Involved in susceptibility to the bacterial plant pathogen Ralstonia solanacearum. The protein is Cysteine protease XCP2 of Arabidopsis thaliana (Mouse-ear cress).